A 356-amino-acid polypeptide reads, in one-letter code: Tyrosine recombinase XerS (356 aa).

Residues 16 to 121 (IMPWYVLDYY…ALSSLYKYLT (106 aa)) enclose the Core-binding (CB) domain. The 186-residue stretch at 169 to 354 (AFLDYVDKEY…VNDEQKNALD (186 aa)) folds into the Tyr recombinase domain. Active-site residues include arginine 210, lysine 234, histidine 306, arginine 309, and histidine 332. Tyrosine 341 functions as the O-(3'-phospho-DNA)-tyrosine intermediate in the catalytic mechanism.

It belongs to the 'phage' integrase family. XerS subfamily.

Its subcellular location is the cytoplasm. Its activity is regulated as follows. FtsK is required for recombination. In terms of biological role, site-specific tyrosine recombinase, which acts by catalyzing the cutting and rejoining of the recombining DNA molecules. Essential to convert dimers of the bacterial chromosome into monomers to permit their segregation at cell division. This chain is Tyrosine recombinase XerS, found in Streptococcus pyogenes serotype M6 (strain ATCC BAA-946 / MGAS10394).